Reading from the N-terminus, the 333-residue chain is Ribokinase (333 aa).

Residues 10 to 12 (NYD), 38 to 42 (GKGLN), and E149 each bind substrate. ATP contacts are provided by residues N193 and 248–253 (TLGSRG). 2 residues coordinate K(+): D277 and T279. Position 282–283 (282–283 (GD)) interacts with ATP. Substrate is bound at residue D283. The Proton acceptor role is filled by D283. K(+) contacts are provided by T313, R316, G318, and S322.

The protein belongs to the carbohydrate kinase PfkB family. Ribokinase subfamily. Homodimer. Mg(2+) serves as cofactor.

It localises to the cytoplasm. It is found in the nucleus. It carries out the reaction D-ribose + ATP = D-ribose 5-phosphate + ADP + H(+). It functions in the pathway carbohydrate metabolism; D-ribose degradation; D-ribose 5-phosphate from beta-D-ribopyranose: step 2/2. Activated by a monovalent cation that binds near, but not in, the active site. The most likely occupant of the site in vivo is potassium. Ion binding induces a conformational change that may alter substrate affinity. Functionally, catalyzes the phosphorylation of ribose at O-5 in a reaction requiring ATP and magnesium. The resulting D-ribose-5-phosphate can then be used either for sythesis of nucleotides, histidine, and tryptophan, or as a component of the pentose phosphate pathway. The polypeptide is Ribokinase (Saccharomyces cerevisiae (strain ATCC 204508 / S288c) (Baker's yeast)).